The primary structure comprises 165 residues: 6,7-dimethyl-8-ribityllumazine synthase (165 aa).

5-amino-6-(D-ribitylamino)uracil-binding positions include Phe-24, 62–64 (AFE), and 86–88 (AVI). 91 to 92 (DT) provides a ligand contact to (2S)-2-hydroxy-3-oxobutyl phosphate. Catalysis depends on His-94, which acts as the Proton donor. Phe-119 lines the 5-amino-6-(D-ribitylamino)uracil pocket. A (2S)-2-hydroxy-3-oxobutyl phosphate-binding site is contributed by Arg-133.

This sequence belongs to the DMRL synthase family.

The catalysed reaction is (2S)-2-hydroxy-3-oxobutyl phosphate + 5-amino-6-(D-ribitylamino)uracil = 6,7-dimethyl-8-(1-D-ribityl)lumazine + phosphate + 2 H2O + H(+). It participates in cofactor biosynthesis; riboflavin biosynthesis; riboflavin from 2-hydroxy-3-oxobutyl phosphate and 5-amino-6-(D-ribitylamino)uracil: step 1/2. Catalyzes the formation of 6,7-dimethyl-8-ribityllumazine by condensation of 5-amino-6-(D-ribitylamino)uracil with 3,4-dihydroxy-2-butanone 4-phosphate. This is the penultimate step in the biosynthesis of riboflavin. This Prochlorococcus marinus (strain MIT 9313) protein is 6,7-dimethyl-8-ribityllumazine synthase.